The following is a 360-amino-acid chain: Peptide chain release factor 1 (360 aa).

Gln235 carries the N5-methylglutamine modification. Basic and acidic residues predominate over residues 281 to 307; sequence ERQRADSERSADRRNQVGSGDRSERIR. The segment at 281–310 is disordered; it reads ERQRADSERSADRRNQVGSGDRSERIRTYN.

This sequence belongs to the prokaryotic/mitochondrial release factor family. Methylated by PrmC. Methylation increases the termination efficiency of RF1.

It localises to the cytoplasm. Its function is as follows. Peptide chain release factor 1 directs the termination of translation in response to the peptide chain termination codons UAG and UAA. The protein is Peptide chain release factor 1 of Sinorhizobium medicae (strain WSM419) (Ensifer medicae).